The chain runs to 90 residues: DNA-directed RNA polymerase subunit Rpo11 (90 aa).

It belongs to the archaeal Rpo11/eukaryotic RPB11/RPC19 RNA polymerase subunit family. In terms of assembly, part of the 13-subunit RNA polymerase complex.

It is found in the cytoplasm. The catalysed reaction is RNA(n) + a ribonucleoside 5'-triphosphate = RNA(n+1) + diphosphate. Functionally, DNA-dependent RNA polymerase (RNAP) catalyzes the transcription of DNA into RNA using the four ribonucleoside triphosphates as substrates. In Sulfolobus acidocaldarius (strain ATCC 33909 / DSM 639 / JCM 8929 / NBRC 15157 / NCIMB 11770), this protein is DNA-directed RNA polymerase subunit Rpo11.